Consider the following 154-residue polypeptide: NADPH-dependent 7-cyano-7-deazaguanine reductase (154 aa).

Cys54 serves as the catalytic Thioimide intermediate. Asp61 serves as the catalytic Proton donor. Substrate contacts are provided by residues 76–78 (VES) and 95–96 (HE).

Belongs to the GTP cyclohydrolase I family. QueF type 1 subfamily.

The protein resides in the cytoplasm. The enzyme catalyses 7-aminomethyl-7-carbaguanine + 2 NADP(+) = 7-cyano-7-deazaguanine + 2 NADPH + 3 H(+). It functions in the pathway tRNA modification; tRNA-queuosine biosynthesis. Catalyzes the NADPH-dependent reduction of 7-cyano-7-deazaguanine (preQ0) to 7-aminomethyl-7-deazaguanine (preQ1). The protein is NADPH-dependent 7-cyano-7-deazaguanine reductase of Porphyromonas gingivalis (strain ATCC 33277 / DSM 20709 / CIP 103683 / JCM 12257 / NCTC 11834 / 2561).